The following is a 262-amino-acid chain: MAAAVAGILRGGLPPRAAWLPTLQTVRHGSKAVTRHWRVMHFQRQKLMAITEYIPPKPAINPRCLPPPPKPPKEESGLVRLLRQDIVAVFRDNRMIAVCQNVALSAEDKLLLRHQLRKHKIFIKVFPSQVLKPFLENSKYRNLLPLFVGHNLLLVSEEPKVKEMVRVLKSVPFLPLLGGCVDDTILSRQGLVDYAKLPSLDQLQGQLVGGLTHLMAQTRYLLQHQPVQLTSLLDQYVKEQNEGDCATSANEKLHPPDPAPDA.

The N-terminal 28 residues, 1–28 (MAAAVAGILRGGLPPRAAWLPTLQTVRH), are a transit peptide targeting the mitochondrion. The interval 243–262 (GDCATSANEKLHPPDPAPDA) is disordered.

It belongs to the universal ribosomal protein uL10 family. As to quaternary structure, component of the mitochondrial ribosome large subunit (39S) which comprises a 16S rRNA and about 50 distinct proteins.

The protein resides in the mitochondrion. The polypeptide is Large ribosomal subunit protein uL10m (Mrpl10) (Mus musculus (Mouse)).